A 685-amino-acid chain; its full sequence is DNA-directed RNA polymerase subunit beta' (685 aa).

Residues Cys69, Cys71, Cys87, and Cys90 each coordinate Zn(2+). The Mg(2+) site is built by Asp489, Asp491, and Asp493.

It belongs to the RNA polymerase beta' chain family. RpoC1 subfamily. As to quaternary structure, in plastids the minimal PEP RNA polymerase catalytic core is composed of four subunits: alpha, beta, beta', and beta''. When a (nuclear-encoded) sigma factor is associated with the core the holoenzyme is formed, which can initiate transcription. It depends on Mg(2+) as a cofactor. Requires Zn(2+) as cofactor.

The protein resides in the plastid. The protein localises to the chloroplast. It catalyses the reaction RNA(n) + a ribonucleoside 5'-triphosphate = RNA(n+1) + diphosphate. In terms of biological role, DNA-dependent RNA polymerase catalyzes the transcription of DNA into RNA using the four ribonucleoside triphosphates as substrates. This chain is DNA-directed RNA polymerase subunit beta', found in Buxus microphylla (Littleleaf boxwood).